Reading from the N-terminus, the 282-residue chain is RsbT co-antagonist protein RsbRC (282 aa).

Residues Ser165 and Ser174 each carry the phosphoserine modification. One can recognise an STAS domain in the interval 165–276 (SAPVIVLFHS…STLASAIASD (112 aa)). Residue Thr186 is modified to Phosphothreonine.

As to quaternary structure, probably present in the stressosome with RsbRA, RsbRB, RsbRD and RsbS. Post-translationally, phosphorylated by RsbT.

In terms of biological role, one of 4 functionally non-identical RsbR paralogs, it functions in the environmental signaling branch of the general stress response. Functionally, negative regulator of sigma-B activity. Non-phosphorylated RsbS binds to RsbT, preventing its association with RsbU. Requires any one of RsbRA, RsbRB, RsbRC or RsbRD to sequester RsbT. When RsbS and the RsbR paralog(s) are phosphorylated, they release RsbT, which can then bind and activate RsbU. In Bacillus subtilis (strain 168), this protein is RsbT co-antagonist protein RsbRC (rsbRC).